The following is a 434-amino-acid chain: Urokinase-type plasminogen activator (434 aa).

Positions Met1 to Ser20 are cleaved as a signal peptide. The 37-residue stretch at Gln36–Glu72 folds into the EGF-like domain. 12 cysteine pairs are disulfide-bonded: Cys40-Cys48, Cys42-Cys60, Cys62-Cys71, Cys79-Cys158, Cys96-Cys139, Cys128-Cys152, Cys162-Cys296, Cys202-Cys218, Cys210-Cys285, Cys310-Cys379, Cys342-Cys358, and Cys369-Cys397. In terms of domain architecture, Kringle spans Cys79–Cys158. A connecting peptide region spans residues Glu159–Lys172. The Peptidase S1 domain occupies Ile173–Asn421. Catalysis depends on His217, which acts as the Charge relay system. An N-linked (GlcNAc...) asparagine glycan is attached at Asn228. Asp272 functions as the Charge relay system in the catalytic mechanism. Ser373 (charge relay system) is an active-site residue.

The protein belongs to the peptidase S1 family.

The protein resides in the secreted. It carries out the reaction Specific cleavage of Arg-|-Val bond in plasminogen to form plasmin.. Specifically cleaves the zymogen plasminogen to form the active enzyme plasmin. The chain is Urokinase-type plasminogen activator (PLAU) from Gallus gallus (Chicken).